We begin with the raw amino-acid sequence, 808 residues long: Sucrose synthase 4 (808 aa).

The interval Met-277 to Thr-754 is GT-B glycosyltransferase.

Belongs to the glycosyltransferase 1 family. Plant sucrose synthase subfamily. As to expression, detected in the whole plant with highest expression in young rosette leaves and roots.

The enzyme catalyses an NDP-alpha-D-glucose + D-fructose = a ribonucleoside 5'-diphosphate + sucrose + H(+). Its function is as follows. Sucrose-cleaving enzyme that provides UDP-glucose and fructose for various metabolic pathways. The chain is Sucrose synthase 4 (SUS4) from Arabidopsis thaliana (Mouse-ear cress).